Here is a 262-residue protein sequence, read N- to C-terminus: Small ribosomal subunit protein uS2 (262 aa).

Belongs to the universal ribosomal protein uS2 family.

The protein is Small ribosomal subunit protein uS2 of Rhodospirillum rubrum (strain ATCC 11170 / ATH 1.1.1 / DSM 467 / LMG 4362 / NCIMB 8255 / S1).